We begin with the raw amino-acid sequence, 23 residues long: Nephrotoxin PsTX-115 (23 aa).

The protein resides in the secreted. It localises to the nematocyst. Its function is as follows. Nephrotoxin. When injected intravenously in rats, causes severe destructive glomerular changes. At 24 hours post-injection partial disruption of the glomerular basement membrane, massive thrombus formation in glomerular capillaries, severe mesangiolysis and infiltrating cells were observed in the majority of glomeruli. The protein is Nephrotoxin PsTX-115 of Phyllodiscus semoni (Night anemone).